The sequence spans 115 residues: Large ribosomal subunit protein uL22 (115 aa).

It belongs to the universal ribosomal protein uL22 family. In terms of assembly, part of the 50S ribosomal subunit.

In terms of biological role, this protein binds specifically to 23S rRNA; its binding is stimulated by other ribosomal proteins, e.g. L4, L17, and L20. It is important during the early stages of 50S assembly. It makes multiple contacts with different domains of the 23S rRNA in the assembled 50S subunit and ribosome. The globular domain of the protein is located near the polypeptide exit tunnel on the outside of the subunit, while an extended beta-hairpin is found that lines the wall of the exit tunnel in the center of the 70S ribosome. This chain is Large ribosomal subunit protein uL22, found in Limosilactobacillus fermentum (strain NBRC 3956 / LMG 18251) (Lactobacillus fermentum).